The primary structure comprises 79 residues: Small ribosomal subunit protein bS18 (79 aa).

The protein belongs to the bacterial ribosomal protein bS18 family. In terms of assembly, part of the 30S ribosomal subunit. Forms a tight heterodimer with protein bS6.

Binds as a heterodimer with protein bS6 to the central domain of the 16S rRNA, where it helps stabilize the platform of the 30S subunit. The sequence is that of Small ribosomal subunit protein bS18 from Rhodopseudomonas palustris (strain HaA2).